The sequence spans 308 residues: Cell division protein FtsQ (308 aa).

Residues 1–53 (MDSGGRIVYALNVEKTGFLRILSVTVLQRLYRRVFWFLFKCVAGIDVPRHAGS) lie on the Cytoplasmic side of the membrane. The helical transmembrane segment at 54 to 74 (LAVFSFFFLSILYSISSGGYM) threads the bilayer. The Periplasmic segment spans residues 75–308 (NHFMKVAISN…LLKMLKAGSV (234 aa)). The 69-residue stretch at 87–155 (FLVTHVDMSG…DRLRISLVER (69 aa)) folds into the POTRA domain.

Belongs to the FtsQ/DivIB family. FtsQ subfamily.

Its subcellular location is the cell inner membrane. In terms of biological role, essential cell division protein. This is Cell division protein FtsQ from Bartonella bacilliformis.